The sequence spans 796 residues: Protein translocase subunit SecA 2 (796 aa).

ATP is bound by residues Q84, 102 to 106 (GEGKT), and D496.

It belongs to the SecA family. As to quaternary structure, monomer and homodimer. Part of the essential Sec protein translocation apparatus which comprises SecA, SecYEG and auxiliary proteins SecDF. Other proteins may also be involved.

It localises to the cell membrane. It is found in the cytoplasm. It catalyses the reaction ATP + H2O + cellular proteinSide 1 = ADP + phosphate + cellular proteinSide 2.. Its function is as follows. Part of the Sec protein translocase complex. Interacts with the SecYEG preprotein conducting channel. Has a central role in coupling the hydrolysis of ATP to the transfer of proteins into and across the cell membrane, serving as an ATP-driven molecular motor driving the stepwise translocation of polypeptide chains across the membrane. This is Protein translocase subunit SecA 2 from Staphylococcus epidermidis (strain ATCC 12228 / FDA PCI 1200).